A 99-amino-acid chain; its full sequence is Large ribosomal subunit protein uL23 (99 aa).

Belongs to the universal ribosomal protein uL23 family. In terms of assembly, part of the 50S ribosomal subunit. Contacts protein L29, and trigger factor when it is bound to the ribosome.

Functionally, one of the early assembly proteins it binds 23S rRNA. One of the proteins that surrounds the polypeptide exit tunnel on the outside of the ribosome. Forms the main docking site for trigger factor binding to the ribosome. This is Large ribosomal subunit protein uL23 from Alkalilimnicola ehrlichii (strain ATCC BAA-1101 / DSM 17681 / MLHE-1).